A 304-amino-acid chain; its full sequence is N-acetyl-D-glucosamine kinase (304 aa).

Residues 4 to 11 (GFDIGGTK) and 133 to 140 (GFGGGLIF) contribute to the ATP site. Residues His157, Cys178, Cys180, and Cys185 each contribute to the Zn(2+) site.

The protein belongs to the ROK (NagC/XylR) family. NagK subfamily.

It carries out the reaction N-acetyl-D-glucosamine + ATP = N-acetyl-D-glucosamine 6-phosphate + ADP + H(+). It functions in the pathway cell wall biogenesis; peptidoglycan recycling. In terms of biological role, catalyzes the phosphorylation of N-acetyl-D-glucosamine (GlcNAc) derived from cell-wall degradation, yielding GlcNAc-6-P. The protein is N-acetyl-D-glucosamine kinase of Pasteurella multocida (strain Pm70).